Reading from the N-terminus, the 1322-residue chain is Phosphoribosylformylglycinamidine synthase (1322 aa).

ATP is bound by residues 300–311 (GASTGAGGEIRD) and alanine 702. Mg(2+)-binding residues include aspartate 703, glutamate 742, asparagine 746, and aspartate 915. ATP is bound at residue serine 917. Residues 1073-1322 (VAILREQGIN…LFRNARAWVG (250 aa)) enclose the Glutamine amidotransferase type-1 domain. Cysteine 1166 (nucleophile) is an active-site residue. Residues histidine 1287 and glutamate 1289 contribute to the active site.

It in the N-terminal section; belongs to the FGAMS family. In terms of assembly, monomer.

The protein localises to the cytoplasm. The enzyme catalyses N(2)-formyl-N(1)-(5-phospho-beta-D-ribosyl)glycinamide + L-glutamine + ATP + H2O = 2-formamido-N(1)-(5-O-phospho-beta-D-ribosyl)acetamidine + L-glutamate + ADP + phosphate + H(+). It participates in purine metabolism; IMP biosynthesis via de novo pathway; 5-amino-1-(5-phospho-D-ribosyl)imidazole from N(2)-formyl-N(1)-(5-phospho-D-ribosyl)glycinamide: step 1/2. Functionally, phosphoribosylformylglycinamidine synthase involved in the purines biosynthetic pathway. Catalyzes the ATP-dependent conversion of formylglycinamide ribonucleotide (FGAR) and glutamine to yield formylglycinamidine ribonucleotide (FGAM) and glutamate. In Xylella fastidiosa (strain Temecula1 / ATCC 700964), this protein is Phosphoribosylformylglycinamidine synthase.